The following is a 243-amino-acid chain: Small ribosomal subunit protein uS3 (243 aa).

The region spanning 38-106 (IRKYLNARLA…DIQINIFEVK (69 aa)) is the KH type-2 domain. The disordered stretch occupies residues 217–243 (TQTKESGRGGNGNNNGGKNFKRKKNNR).

Belongs to the universal ribosomal protein uS3 family. As to quaternary structure, part of the 30S ribosomal subunit. Forms a tight complex with proteins S10 and S14.

In terms of biological role, binds the lower part of the 30S subunit head. Binds mRNA in the 70S ribosome, positioning it for translation. The polypeptide is Small ribosomal subunit protein uS3 (Phocaeicola vulgatus (strain ATCC 8482 / DSM 1447 / JCM 5826 / CCUG 4940 / NBRC 14291 / NCTC 11154) (Bacteroides vulgatus)).